The primary structure comprises 1372 residues: DNA-directed RNA polymerase subunit beta (1372 aa).

This sequence belongs to the RNA polymerase beta chain family. As to quaternary structure, the RNAP catalytic core consists of 2 alpha, 1 beta, 1 beta' and 1 omega subunit. When a sigma factor is associated with the core the holoenzyme is formed, which can initiate transcription.

The catalysed reaction is RNA(n) + a ribonucleoside 5'-triphosphate = RNA(n+1) + diphosphate. DNA-dependent RNA polymerase catalyzes the transcription of DNA into RNA using the four ribonucleoside triphosphates as substrates. The protein is DNA-directed RNA polymerase subunit beta of Rickettsia bellii (strain OSU 85-389).